Consider the following 341-residue polypeptide: MLVLGLETSCDETGVALYDSERGLLADALFSQIDLHRVYGGVVPELASRDHVKRMLPLIRQVLAEADCVPTEIDAIAYTAGPGLVGALLVGASCAQALAFAWGIPALGVHHMEGHLLAPMLEPKPPEFPFVALLVSGGHTQLVQVDGIGQYSLLGETLDDAAGEAFDKTAKMMGLNYPGGPEIAKLAEKGVAGRFTFPRPMCDRPGLDFSFSGLKTFALNTWQQCVSAGDDSEQARCDIALAFQQAVVETLTIKCKRALKQAGMKRLVIAGGVSANRALRVSLEKMLGDMKGDVFYARPEFCTDNGAMIAFAGCQRLQAGQQESLAISVQARWPMEQLSAL.

The Fe cation site is built by H111 and H115. Substrate contacts are provided by residues 134–138, D167, G180, and N276; that span reads LVSGG. D304 provides a ligand contact to Fe cation.

This sequence belongs to the KAE1 / TsaD family. Fe(2+) is required as a cofactor.

It localises to the cytoplasm. It catalyses the reaction L-threonylcarbamoyladenylate + adenosine(37) in tRNA = N(6)-L-threonylcarbamoyladenosine(37) in tRNA + AMP + H(+). Its function is as follows. Required for the formation of a threonylcarbamoyl group on adenosine at position 37 (t(6)A37) in tRNAs that read codons beginning with adenine. Is involved in the transfer of the threonylcarbamoyl moiety of threonylcarbamoyl-AMP (TC-AMP) to the N6 group of A37, together with TsaE and TsaB. TsaD likely plays a direct catalytic role in this reaction. The protein is tRNA N6-adenosine threonylcarbamoyltransferase of Pseudomonas fluorescens (strain Pf0-1).